We begin with the raw amino-acid sequence, 308 residues long: S-adenosylmethionine-dependent nucleotide dehydratase (308 aa).

Residues 7-253 (SIQELVINFH…WQSYLMINPE (247 aa)) enclose the Radical SAM core domain. Residues Cys21, Cys25, and Cys28 each coordinate [4Fe-4S] cluster.

This sequence belongs to the radical SAM superfamily. Viperin family. [4Fe-4S] cluster serves as cofactor.

It catalyses the reaction CTP + AH2 + S-adenosyl-L-methionine = 3'-deoxy-3',4'-didehydro-CTP + 5'-deoxyadenosine + L-methionine + A + H2O + H(+). The enzyme catalyses GTP + AH2 + S-adenosyl-L-methionine = 3'-deoxy-3',4'-didehydro-GTP + 5'-deoxyadenosine + L-methionine + A + H2O + H(+). It carries out the reaction UTP + AH2 + S-adenosyl-L-methionine = 3'-deoxy-3',4'-didehydro-UTP + 5'-deoxyadenosine + L-methionine + A + H2O + H(+). In terms of biological role, expression of pVip58 in E.coli (strain MG1655) confers resistance to phages lambda, P1 and T7; delays culture collapse upon infection with T7. Catalyzes the conversion of cytidine triphosphate (CTP) to 3'-deoxy-3',4'-didehydro-CTP (ddhCTP), guanosine triphosphate (GTP) to 3'-deoxy-3',4'-didehydro-GTP (ddhGTP) and uridine triphosphate (UTP) to 3'-deoxy-3',4'-didehydro-UTP (ddhUTP), probably via a SAM-dependent radical mechanism. The modified nucleotide represses transcription from T7 RNA polymerase-directed genes (possibly by acting as chain terminators), strongly suggesting these nucleotides block viral polymerase transcription. The sequence is that of S-adenosylmethionine-dependent nucleotide dehydratase from Pseudoalteromonas ulvae.